Here is a 32-residue protein sequence, read N- to C-terminus: Potassium channel toxin alpha-KTx 10.6 (32 aa).

Disulfide bonds link cysteine 3-cysteine 22, cysteine 8-cysteine 27, and cysteine 12-cysteine 29.

Expressed by the venom gland.

Its subcellular location is the secreted. In terms of biological role, blocks human voltage-gated potassium (Kv) channels Kv1.2/KCNA2 and Kv1.3/KCNA3. Does not block human Kv1.1 at 100nM concentration. The polypeptide is Potassium channel toxin alpha-KTx 10.6 (Centruroides bonito (Scorpion)).